A 142-amino-acid chain; its full sequence is Hemoglobin subunit alpha-A (142 aa).

The 141-residue stretch at 2–142 (VLTAGDKANV…VATALTSKYR (141 aa)) folds into the Globin domain. Heme b contacts are provided by His-59 and His-88.

It belongs to the globin family. In terms of assembly, heterotetramer of two alpha-A chains and two beta chains. In terms of tissue distribution, red blood cells.

In terms of biological role, involved in oxygen transport from the lung to the various peripheral tissues. This chain is Hemoglobin subunit alpha-A, found in Chelonoidis niger (Galapagos giant tortoise).